The primary structure comprises 334 residues: Holliday junction branch migration complex subunit RuvB (334 aa).

The large ATPase domain (RuvB-L) stretch occupies residues 4–184 (ADRIISASPK…FGIVQRLEFY (181 aa)). Residues isoleucine 23, arginine 24, glycine 65, lysine 68, threonine 69, threonine 70, 131-133 (EDY), arginine 174, tyrosine 184, and arginine 221 each bind ATP. Position 69 (threonine 69) interacts with Mg(2+). Positions 185 to 255 (SVDDLTSIVK…IAKQALAMLD (71 aa)) are small ATPAse domain (RuvB-S). The interval 258-334 (SEGFDFMDIK…YAHLGIAKLD (77 aa)) is head domain (RuvB-H). Arginine 294, arginine 313, and arginine 318 together coordinate DNA.

It belongs to the RuvB family. Homohexamer. Forms an RuvA(8)-RuvB(12)-Holliday junction (HJ) complex. HJ DNA is sandwiched between 2 RuvA tetramers; dsDNA enters through RuvA and exits via RuvB. An RuvB hexamer assembles on each DNA strand where it exits the tetramer. Each RuvB hexamer is contacted by two RuvA subunits (via domain III) on 2 adjacent RuvB subunits; this complex drives branch migration. In the full resolvosome a probable DNA-RuvA(4)-RuvB(12)-RuvC(2) complex forms which resolves the HJ.

The protein resides in the cytoplasm. The enzyme catalyses ATP + H2O = ADP + phosphate + H(+). In terms of biological role, the RuvA-RuvB-RuvC complex processes Holliday junction (HJ) DNA during genetic recombination and DNA repair, while the RuvA-RuvB complex plays an important role in the rescue of blocked DNA replication forks via replication fork reversal (RFR). RuvA specifically binds to HJ cruciform DNA, conferring on it an open structure. The RuvB hexamer acts as an ATP-dependent pump, pulling dsDNA into and through the RuvAB complex. RuvB forms 2 homohexamers on either side of HJ DNA bound by 1 or 2 RuvA tetramers; 4 subunits per hexamer contact DNA at a time. Coordinated motions by a converter formed by DNA-disengaged RuvB subunits stimulates ATP hydrolysis and nucleotide exchange. Immobilization of the converter enables RuvB to convert the ATP-contained energy into a lever motion, pulling 2 nucleotides of DNA out of the RuvA tetramer per ATP hydrolyzed, thus driving DNA branch migration. The RuvB motors rotate together with the DNA substrate, which together with the progressing nucleotide cycle form the mechanistic basis for DNA recombination by continuous HJ branch migration. Branch migration allows RuvC to scan DNA until it finds its consensus sequence, where it cleaves and resolves cruciform DNA. This chain is Holliday junction branch migration complex subunit RuvB, found in Actinobacillus pleuropneumoniae serotype 5b (strain L20).